A 348-amino-acid chain; its full sequence is Lipoyl synthase (348 aa).

[4Fe-4S] cluster-binding residues include Cys55, Cys60, Cys66, Cys81, Cys85, Cys88, and Ser292. The region spanning 67 to 281 (WESREATFLI…ADAAKEMGFA (215 aa)) is the Radical SAM core domain.

The protein belongs to the radical SAM superfamily. Lipoyl synthase family. [4Fe-4S] cluster serves as cofactor.

The protein localises to the cytoplasm. The enzyme catalyses [[Fe-S] cluster scaffold protein carrying a second [4Fe-4S](2+) cluster] + N(6)-octanoyl-L-lysyl-[protein] + 2 oxidized [2Fe-2S]-[ferredoxin] + 2 S-adenosyl-L-methionine + 4 H(+) = [[Fe-S] cluster scaffold protein] + N(6)-[(R)-dihydrolipoyl]-L-lysyl-[protein] + 4 Fe(3+) + 2 hydrogen sulfide + 2 5'-deoxyadenosine + 2 L-methionine + 2 reduced [2Fe-2S]-[ferredoxin]. It participates in protein modification; protein lipoylation via endogenous pathway; protein N(6)-(lipoyl)lysine from octanoyl-[acyl-carrier-protein]: step 2/2. In terms of biological role, catalyzes the radical-mediated insertion of two sulfur atoms into the C-6 and C-8 positions of the octanoyl moiety bound to the lipoyl domains of lipoate-dependent enzymes, thereby converting the octanoylated domains into lipoylated derivatives. This Corynebacterium glutamicum (strain R) protein is Lipoyl synthase.